Consider the following 592-residue polypeptide: Probable oxidoreductase EphD (592 aa).

Residues 30–286 form the AB hydrolase-1 domain; it reads PTVVLVHGFP…KAGHFSPMSH (257 aa). A substrate-binding site is contributed by serine 461. Tyrosine 474 functions as the Proton acceptor in the catalytic mechanism.

It belongs to the short-chain dehydrogenases/reductases (SDR) family.

This is Probable oxidoreductase EphD (ephD) from Mycobacterium bovis (strain ATCC BAA-935 / AF2122/97).